Reading from the N-terminus, the 807-residue chain is Serine/threonine-protein kinase AfsK (807 aa).

Positions 16-272 (FEVLGRLGAG…QAQLAPHLFA (257 aa)) constitute a Protein kinase domain. ATP contacts are provided by residues 22–30 (LGAGGMGLV) and Lys44. Phosphoserine; by autocatalysis is present on Ser71. Asp138 (proton acceptor) is an active-site residue. Position 168 is a phosphothreonine; by autocatalysis (Thr168). Disordered stretches follow at residues 292-328 (MIER…HRLA) and 353-429 (AGPS…PSPA). A compositionally biased stretch (basic residues) spans 297–315 (RGGRRTARRPPRPRPRRLR). The segment covering 353-363 (AGPSAAPDGGP) has biased composition (low complexity).

It belongs to the protein kinase superfamily. Ser/Thr protein kinase family. Interacts (via the N-terminal kinase domain) with KbpA; the interaction prevents autophosphorylation of AfsK. In terms of processing, autophosphorylated mainly on threonine residues. Some phosphorylation on serine residues. Autophosphorylation on Thr-168 is the major site enhancing kinase activity towards AfsR, and is regulated though interaction with KbpA.

It catalyses the reaction L-seryl-[protein] + ATP = O-phospho-L-seryl-[protein] + ADP + H(+). It carries out the reaction L-threonyl-[protein] + ATP = O-phospho-L-threonyl-[protein] + ADP + H(+). Functionally, component of the AfsK/AfsR system involved in the response of aerial mycelium formation to glucose. The chain is Serine/threonine-protein kinase AfsK (afsK) from Streptomyces griseus.